The sequence spans 176 residues: Lipoprotein signal peptidase (176 aa).

3 consecutive transmembrane segments (helical) span residues 12–32 (WYWM…WVLA), 67–87 (WQRW…TIWL), and 94–116 (MWRL…IDRL). Catalysis depends on residues Asp-123 and Asp-141. A helical membrane pass occupies residues 137–157 (FNIADSAICVGAALIIIDSII).

The protein belongs to the peptidase A8 family.

It localises to the cell inner membrane. It carries out the reaction Release of signal peptides from bacterial membrane prolipoproteins. Hydrolyzes -Xaa-Yaa-Zaa-|-(S,diacylglyceryl)Cys-, in which Xaa is hydrophobic (preferably Leu), and Yaa (Ala or Ser) and Zaa (Gly or Ala) have small, neutral side chains.. It functions in the pathway protein modification; lipoprotein biosynthesis (signal peptide cleavage). Functionally, this protein specifically catalyzes the removal of signal peptides from prolipoproteins. The sequence is that of Lipoprotein signal peptidase from Shewanella woodyi (strain ATCC 51908 / MS32).